A 446-amino-acid chain; its full sequence is Phosphoglucosamine mutase (446 aa).

Catalysis depends on Ser-103, which acts as the Phosphoserine intermediate. Residues Ser-103, Asp-242, Asp-244, and Asp-246 each coordinate Mg(2+). Ser-103 is modified (phosphoserine).

The protein belongs to the phosphohexose mutase family. It depends on Mg(2+) as a cofactor. In terms of processing, activated by phosphorylation.

It catalyses the reaction alpha-D-glucosamine 1-phosphate = D-glucosamine 6-phosphate. Functionally, catalyzes the conversion of glucosamine-6-phosphate to glucosamine-1-phosphate. This chain is Phosphoglucosamine mutase, found in Vibrio atlanticus (strain LGP32) (Vibrio splendidus (strain Mel32)).